The following is a 39-amino-acid chain: Photosystem II reaction center protein L (39 aa).

A helical membrane pass occupies residues 18-38 (SLYLGLLLVAVLGILFSSYFF).

The protein belongs to the PsbL family. As to quaternary structure, PSII is composed of 1 copy each of membrane proteins PsbA, PsbB, PsbC, PsbD, PsbE, PsbF, PsbH, PsbI, PsbJ, PsbK, PsbL, PsbM, PsbT, PsbX, PsbY, PsbZ, Psb30/Ycf12, peripheral proteins PsbO, CyanoQ (PsbQ), PsbU, PsbV and a large number of cofactors. It forms dimeric complexes.

It localises to the cellular thylakoid membrane. Functionally, one of the components of the core complex of photosystem II (PSII). PSII is a light-driven water:plastoquinone oxidoreductase that uses light energy to abstract electrons from H(2)O, generating O(2) and a proton gradient subsequently used for ATP formation. It consists of a core antenna complex that captures photons, and an electron transfer chain that converts photonic excitation into a charge separation. This subunit is found at the monomer-monomer interface and is required for correct PSII assembly and/or dimerization. This chain is Photosystem II reaction center protein L, found in Rippkaea orientalis (strain PCC 8801 / RF-1) (Cyanothece sp. (strain PCC 8801)).